Consider the following 313-residue polypeptide: Methionyl-tRNA formyltransferase (313 aa).

111 to 114 (SLLP) is a (6S)-5,6,7,8-tetrahydrofolate binding site.

The protein belongs to the Fmt family.

The catalysed reaction is L-methionyl-tRNA(fMet) + (6R)-10-formyltetrahydrofolate = N-formyl-L-methionyl-tRNA(fMet) + (6S)-5,6,7,8-tetrahydrofolate + H(+). Its function is as follows. Attaches a formyl group to the free amino group of methionyl-tRNA(fMet). The formyl group appears to play a dual role in the initiator identity of N-formylmethionyl-tRNA by promoting its recognition by IF2 and preventing the misappropriation of this tRNA by the elongation apparatus. This chain is Methionyl-tRNA formyltransferase, found in Mesoplasma florum (strain ATCC 33453 / NBRC 100688 / NCTC 11704 / L1) (Acholeplasma florum).